Here is a 224-residue protein sequence, read N- to C-terminus: Ribose-5-phosphate isomerase A (224 aa).

Residues 26-29 (TGST), 82-85 (DGAD), and 95-98 (KGGG) each bind substrate. The active-site Proton acceptor is the Glu-104. Lys-122 contacts substrate.

This sequence belongs to the ribose 5-phosphate isomerase family. As to quaternary structure, homodimer.

The catalysed reaction is aldehydo-D-ribose 5-phosphate = D-ribulose 5-phosphate. Its pathway is carbohydrate degradation; pentose phosphate pathway; D-ribose 5-phosphate from D-ribulose 5-phosphate (non-oxidative stage): step 1/1. Functionally, catalyzes the reversible conversion of ribose-5-phosphate to ribulose 5-phosphate. In Lactococcus lactis subsp. cremoris (strain SK11), this protein is Ribose-5-phosphate isomerase A.